The primary structure comprises 2283 residues: AT-rich interactive domain-containing protein 1A (2283 aa).

Positions 1–10 (MAAQVAPAAA) are enriched in low complexity. 3 disordered regions span residues 1-333 (MAAQ…PADM), 346-822 (AAAA…LPNA), and 979-1006 (ATKMNNKADGTPKTESKSKKSSSSTTTN). At alanine 2 the chain carries N-acetylalanine. Basic and acidic residues predominate over residues 22 to 34 (ELKKAEQQQREEA). Phosphoserine is present on residues serine 56 and serine 77. Residues 77–93 (SNGGGGGGGAGSGGGPG) show a composition bias toward gly residues. 2 stretches are compositionally biased toward low complexity: residues 128 to 143 (SSSDGVGAPPHSAAAA) and 233 to 266 (SSPRGGTPGSGAAAAAGSKPPPSSSASASSSSSS). At serine 234 the chain carries Phosphoserine. Residues 274–287 (AMGGGGPSAAGGGT) show a composition bias toward gly residues. Threonine 287 bears the Phosphothreonine mark. An LXXLL motif is present at residues 296 to 300 (LNQLL). Residues 296–307 (LNQLLTSPSSAR) show a composition bias toward polar residues. Serine 302 bears the Phosphoserine mark. Positions 311–328 (GYPGGDYGGGPQDGGAGK) are enriched in gly residues. Phosphoserine is present on residues serine 365 and serine 384. The span at 402–427 (PYSQQQGPPSGPQQGHGYPGQPYGSQ) shows a compositional bias: low complexity. Position 431 is an asymmetric dimethylarginine (arginine 431). 2 stretches are compositionally biased toward polar residues: residues 438–451 (GRAQSAMGSLSYAQ) and 459–470 (QGPSAYGQQGQT). Low complexity-rich tracts occupy residues 471 to 547 (PYYN…QHPQ) and 554 to 596 (QPQA…YSQQ). Residue serine 605 is modified to Phosphoserine. The span at 611 to 622 (SQASSAPSMTSS) shows a compositional bias: low complexity. Residues 629–638 (MNLSLQSRPS) show a composition bias toward polar residues. The segment covering 659–675 (SPGVSTSGISSSQGEQS) has biased composition (low complexity). Over residues 676-686 (NPAQSPFSPHT) the composition is skewed to polar residues. 6 positions are modified to phosphoserine: serine 697, serine 699, serine 703, serine 731, serine 765, and serine 773. Composition is skewed to polar residues over residues 731–748 (SGQSDSIMHPSMNQSSIA) and 756–794 (RNPQMPQYTSPQPGSALSPRQPSGGQMHSGVGSYQQNSM). Residues 795–822 (GSYGPQGSQYGPQGGYPRQPNYNALPNA) are compositionally biased toward low complexity. One can recognise an ARID domain in the interval 1018–1109 (EPERKMWVDR…CLYAFECKIE (92 aa)). Disordered stretches follow at residues 1114-1484 (PPPD…MMGG) and 1539-1636 (RANH…PPMI). Residues 1142–1155 (MQGPQTPQSTSSSM) are compositionally biased toward low complexity. Pro residues predominate over residues 1163-1178 (PPTPASTPHSQIPPLP). Serine 1185 carries the phosphoserine modification. Residues 1198-1220 (PTFQKRNSMTPNPGYQPSMNTSD) are compositionally biased toward polar residues. Serine 1236 carries the post-translational modification Phosphoserine. An Omega-N-methylarginine modification is found at arginine 1277. Positions 1343–1368 (QFSTQGTPSSSPFPSQQTTMYQQQQQ) are enriched in low complexity. The Nuclear localization signal motif lies at 1369–1388 (NYKRPMDGTYGPPAKRHEGE). Over residues 1395 to 1426 (SAGQGQPQQQQLPAAQSQPASQPQAAQPSPQQ) the composition is skewed to low complexity. 2 stretches are compositionally biased toward polar residues: residues 1427–1436 (DVYNQYSNAY) and 1469–1478 (PGSSAQQNMP). The span at 1555 to 1579 (PYGPSAPVPPMTRPPPSNYQPPPSM) shows a compositional bias: pro residues. Serine 1605 bears the Phosphoserine mark. N6-acetyllysine is present on lysine 1613. An LXXLL motif is present at residues 1710-1714 (LPGLL). Disordered stretches follow at residues 1757-1782 (PAHTEEEEEEHLDPKLEEEEEEGVGN), 1872-1904 (CPTPPRKHLTTVEGTPGTTEQEGPPPDGLPEKR), and 1917-1941 (SSTLTDEGAKSAEATKESSKFPFGI). The segment covering 1761 to 1782 (EEEEEEHLDPKLEEEEEEGVGN) has biased composition (acidic residues). Phosphothreonine occurs at positions 1874 and 1886. The segment covering 1882–1893 (TVEGTPGTTEQE) has biased composition (low complexity). At lysine 1903 the chain carries N6-acetyllysine. Positions 1923-1935 (EGAKSAEATKESS) are enriched in basic and acidic residues. Serine 1927 and serine 1942 each carry phosphoserine. 2 short sequence motifs (LXXLL) span residues 1965–1969 (LCTLL) and 2083–2087 (LDGLL).

Component of SWI/SNF chromatin remodeling complexes, in some of which it can be mutually exclusive with ARID1B/BAF250B. The canonical complex contains a catalytic subunit (either SMARCA4/BRG1/BAF190A or SMARCA2/BRM/BAF190B) and at least SMARCE1, ACTL6A/BAF53, SMARCC1/BAF155, SMARCC2/BAF170, and SMARCB1/SNF5/BAF47. Other subunits specific to each of the complexes may also be present permitting several possible combinations developmentally and tissue specific. Component of the BAF (SWI/SNF-A) complex, which includes at least actin (ACTB), ARID1A/BAF250A, ARID1B/BAF250B, SMARCA2/BRM, SMARCA4/BRG1/BAF190A, ACTL6A/BAF53, ACTL6B/BAF53B, SMARCE1/BAF57, SMARCC1/BAF155, SMARCC2/BAF170, SMARCB1/SNF5/INI1, and one or more SMARCD1/BAF60A, SMARCD2/BAF60B, or SMARCD3/BAF60C. In muscle cells, the BAF complex also contains DPF3. Component of neural progenitors-specific chromatin remodeling complex (npBAF complex) composed of at least, ARID1A/BAF250A or ARID1B/BAF250B, SMARCD1/BAF60A, SMARCD3/BAF60C, SMARCA2/BRM/BAF190B, SMARCA4/BRG1/BAF190A, SMARCB1/BAF47, SMARCC1/BAF155, SMARCE1/BAF57, SMARCC2/BAF170, PHF10/BAF45A, ACTL6A/BAF53A and actin. Component of neuron-specific chromatin remodeling complex (nBAF complex) composed of at least, ARID1A/BAF250A or ARID1B/BAF250B, SMARCD1/BAF60A, SMARCD3/BAF60C, SMARCA2/BRM/BAF190B, SMARCA4/BRG1/BAF190A, SMARCB1/BAF47, SMARCC1/BAF155, SMARCE1/BAF57, SMARCC2/BAF170, DPF1/BAF45B, DPF3/BAF45C, ACTL6B/BAF53B and actin. Component of a SWI/SNF-like EBAFa complex, at least composed of SMARCA4/BRG1/BAF190A, SMARCB1/BAF47/SNF5, ACTL6A/BAF53A, SMARCE1/BAF57, SMARCD1/BAF60A, SMARCC1/BAF155, SMARCC2/BAF170, BAF250A and MLLT1/ENL. Interacts through its C-terminus with SMARCA2/BRM/BAF190B and SMARCA4/BRG1/BAF190A. Interacts with SMARCC1/BAF155. Interacts with FOS (via bZIP domain and leucine-zipper region), FOSB isoform 1 and 2, FOSL1 and FOSL2. In terms of tissue distribution, widely expressed. Expressed at high levels in the testis.

The protein localises to the nucleus. In terms of biological role, involved in transcriptional activation and repression of select genes by chromatin remodeling (alteration of DNA-nucleosome topology). Component of SWI/SNF chromatin remodeling complexes that carry out key enzymatic activities, changing chromatin structure by altering DNA-histone contacts within a nucleosome in an ATP-dependent manner. Binds DNA non-specifically. Belongs to the neural progenitors-specific chromatin remodeling complex (npBAF complex) and the neuron-specific chromatin remodeling complex (nBAF complex). During neural development a switch from a stem/progenitor to a postmitotic chromatin remodeling mechanism occurs as neurons exit the cell cycle and become committed to their adult state. The transition from proliferating neural stem/progenitor cells to postmitotic neurons requires a switch in subunit composition of the npBAF and nBAF complexes. As neural progenitors exit mitosis and differentiate into neurons, npBAF complexes which contain ACTL6A/BAF53A and PHF10/BAF45A, are exchanged for homologous alternative ACTL6B/BAF53B and DPF1/BAF45B or DPF3/BAF45C subunits in neuron-specific complexes (nBAF). The npBAF complex is essential for the self-renewal/proliferative capacity of the multipotent neural stem cells. The nBAF complex along with CREST plays a role regulating the activity of genes essential for dendrite growth. This is AT-rich interactive domain-containing protein 1A (Arid1a) from Mus musculus (Mouse).